We begin with the raw amino-acid sequence, 809 residues long: Glutamine--tRNA ligase (809 aa).

A compositionally biased stretch (basic and acidic residues) spans 185–198 (DLIKKKTKNNEKKK). The interval 185 to 216 (DLIKKKTKNNEKKKTNSAKKSSDNSASSGPKR) is disordered. Residues 258–268 (PEPNGYLHIGH) carry the 'HIGH' region motif. Residues 259–261 (EPN) and 265–271 (HIGHSKA) each bind ATP. Asp-291 lines the L-glutamine pocket. The residue at position 378 (Ser-378) is a Phosphoserine. Residue Tyr-440 participates in L-glutamine binding. ATP-binding positions include Thr-459, 488–489 (RL), and 496–498 (LSK). The short motif at 495 to 499 (VLSKR) is the 'KMSKS' region element.

Belongs to the class-I aminoacyl-tRNA synthetase family.

It carries out the reaction tRNA(Gln) + L-glutamine + ATP = L-glutaminyl-tRNA(Gln) + AMP + diphosphate. The chain is Glutamine--tRNA ligase (GLN4) from Saccharomyces cerevisiae (strain ATCC 204508 / S288c) (Baker's yeast).